A 364-amino-acid chain; its full sequence is UDP-N-acetylglucosamine--N-acetylmuramyl-(pentapeptide) pyrophosphoryl-undecaprenol N-acetylglucosamine transferase 1 (364 aa).

UDP-N-acetyl-alpha-D-glucosamine is bound by residues 10 to 12 (TGG), N124, S195, I250, and Q295.

This sequence belongs to the glycosyltransferase 28 family. MurG subfamily.

It is found in the cell membrane. The enzyme catalyses di-trans,octa-cis-undecaprenyl diphospho-N-acetyl-alpha-D-muramoyl-L-alanyl-D-glutamyl-meso-2,6-diaminopimeloyl-D-alanyl-D-alanine + UDP-N-acetyl-alpha-D-glucosamine = di-trans,octa-cis-undecaprenyl diphospho-[N-acetyl-alpha-D-glucosaminyl-(1-&gt;4)]-N-acetyl-alpha-D-muramoyl-L-alanyl-D-glutamyl-meso-2,6-diaminopimeloyl-D-alanyl-D-alanine + UDP + H(+). The protein operates within cell wall biogenesis; peptidoglycan biosynthesis. Functionally, cell wall formation. Catalyzes the transfer of a GlcNAc subunit on undecaprenyl-pyrophosphoryl-MurNAc-pentapeptide (lipid intermediate I) to form undecaprenyl-pyrophosphoryl-MurNAc-(pentapeptide)GlcNAc (lipid intermediate II). The protein is UDP-N-acetylglucosamine--N-acetylmuramyl-(pentapeptide) pyrophosphoryl-undecaprenol N-acetylglucosamine transferase 1 of Bacillus cereus (strain ATCC 10987 / NRS 248).